The chain runs to 328 residues: MLNEFPIFDYEDIQLIPNKCVIKSRAEADTSVTLGNHTFKLPVVPANMQTILDENVAEQLAKGGYFYIMHRFDEAGRIPFIKRMHDQGLIASISVGVKDYEYDFVSQLKADAPEYITIDIAHGHADSVISMIQHIKKELPDTFVIAGNVGTPEAVRELENAGADATKVGIGPGKVCITKVKTGFGTGGWQLAAXRWCAKAARKPIIADGGIRTHGDIAKSIRFGASMIMIGSLFAGHIESPGKTIEVDGEQFKEYYGSASQYQKGAYKNVEGKRILLPAKGHLQDTLTEMEQDLQSAISYAGGRQVADLKHVDYVIVKNSIWNGDASH.

Cys176 (thioimidate intermediate) is an active-site residue. An NADP(+)-binding site is contributed by 205 to 228; that stretch reads IIADGGIRTHGDIAKSIRFGASMI.

The protein belongs to the IMPDH/GMPR family. GuaC type 2 subfamily.

The catalysed reaction is IMP + NH4(+) + NADP(+) = GMP + NADPH + 2 H(+). In terms of biological role, catalyzes the irreversible NADPH-dependent deamination of GMP to IMP. It functions in the conversion of nucleobase, nucleoside and nucleotide derivatives of G to A nucleotides, and in maintaining the intracellular balance of A and G nucleotides. The protein is GMP reductase of Streptococcus pneumoniae serotype 19F (strain G54).